A 384-amino-acid chain; its full sequence is Anhydro-N-acetylmuramic acid kinase (384 aa).

9–16 (GTSYDAID) provides a ligand contact to ATP.

It belongs to the anhydro-N-acetylmuramic acid kinase family.

It carries out the reaction 1,6-anhydro-N-acetyl-beta-muramate + ATP + H2O = N-acetyl-D-muramate 6-phosphate + ADP + H(+). Its pathway is amino-sugar metabolism; 1,6-anhydro-N-acetylmuramate degradation. It participates in cell wall biogenesis; peptidoglycan recycling. Catalyzes the specific phosphorylation of 1,6-anhydro-N-acetylmuramic acid (anhMurNAc) with the simultaneous cleavage of the 1,6-anhydro ring, generating MurNAc-6-P. Is required for the utilization of anhMurNAc either imported from the medium or derived from its own cell wall murein, and thus plays a role in cell wall recycling. In Streptomyces avermitilis (strain ATCC 31267 / DSM 46492 / JCM 5070 / NBRC 14893 / NCIMB 12804 / NRRL 8165 / MA-4680), this protein is Anhydro-N-acetylmuramic acid kinase.